The sequence spans 425 residues: Histidine--tRNA ligase (425 aa).

It belongs to the class-II aminoacyl-tRNA synthetase family. As to quaternary structure, homodimer.

Its subcellular location is the cytoplasm. The catalysed reaction is tRNA(His) + L-histidine + ATP = L-histidyl-tRNA(His) + AMP + diphosphate + H(+). The chain is Histidine--tRNA ligase from Shewanella sp. (strain W3-18-1).